A 555-amino-acid polypeptide reads, in one-letter code: MFTPQSISQRSNGLHFKRPVTYKTTMLHPVMSVSSRSSQEESLMTVGESVSSLSMQEQQTESDTDASHSDNEENDNVDSVSNFDNLSNSIHLISLNEVDELLEDHQSTIQSSLNRGLTCTNLPDHSIKSGVTRSTVSTVRPTSKQHHQPYKYRSLLLPFEPSRGSRSMRRKIGGSRGSSLASVRRIFRSTHHLQPHKDLNSLPHEIMSKIVSHLDQRDVTMCLYVNKNMYSTAVRQLYKEPFFSSTYRFAQFVTQVSHNDELASYVQKLDLSTIRPGFESDEDDSAIFENEPIEDDAVLAGWRDWKLRGDPLYSRQFKRLTKHVSNSSSSLSCSRTSSNSNSSTESKPVKKRRSVTTAIRESRIWLSFYKKNKLYQASEEVLEALRKQNSPLVRPKVPFSTAHPISSPFLRQYSTSKDVPVGHLIHVVAACKNLTDIDISFLPLAEDYAVAGSSSYLPTASSGLLFVSDVAKLYTWKPDEIVPVSPSDLVVAMLQLRDLQVLKLRKLMWVKRDSVVRLVNENNSLVHLDLTDSGLVRGARWAIAGSVEELRQTLK.

2 disordered regions span residues 31-82 and 124-147; these read MSVS…SVSN and DHSIKSGVTRSTVSTVRPTSKQHH. Over residues 32–42 the composition is skewed to low complexity; the sequence is SVSSRSSQEES. Positions 48-61 are enriched in polar residues; it reads ESVSSLSMQEQQTE. Low complexity predominate over residues 129–142; it reads SGVTRSTVSTVRPT. One can recognise an F-box domain in the interval 196 to 246; sequence HKDLNSLPHEIMSKIVSHLDQRDVTMCLYVNKNMYSTAVRQLYKEPFFSST. Positions 327-346 are enriched in low complexity; that stretch reads SSSSLSCSRTSSNSNSSTES. The segment at 327-354 is disordered; that stretch reads SSSSLSCSRTSSNSNSSTESKPVKKRRS.

F-box protein probably involved in ubiquitin conjugation pathway. This is F-box protein COS111 (COS111) from Yarrowia lipolytica (strain CLIB 122 / E 150) (Yeast).